Here is a 316-residue protein sequence, read N- to C-terminus: Aspartate carbamoyltransferase catalytic subunit (316 aa).

Carbamoyl phosphate contacts are provided by Arg58 and Thr59. Residue Lys86 coordinates L-aspartate. The carbamoyl phosphate site is built by Arg108, His136, and Gln139. 2 residues coordinate L-aspartate: Arg169 and Arg223. Carbamoyl phosphate is bound by residues Gly264 and Pro265.

This sequence belongs to the aspartate/ornithine carbamoyltransferase superfamily. ATCase family. In terms of assembly, heterododecamer (2C3:3R2) of six catalytic PyrB chains organized as two trimers (C3), and six regulatory PyrI chains organized as three dimers (R2).

The enzyme catalyses carbamoyl phosphate + L-aspartate = N-carbamoyl-L-aspartate + phosphate + H(+). It participates in pyrimidine metabolism; UMP biosynthesis via de novo pathway; (S)-dihydroorotate from bicarbonate: step 2/3. In terms of biological role, catalyzes the condensation of carbamoyl phosphate and aspartate to form carbamoyl aspartate and inorganic phosphate, the committed step in the de novo pyrimidine nucleotide biosynthesis pathway. The protein is Aspartate carbamoyltransferase catalytic subunit of Granulibacter bethesdensis (strain ATCC BAA-1260 / CGDNIH1).